We begin with the raw amino-acid sequence, 610 residues long: Anthocyanin regulatory Lc protein (610 aa).

2 disordered regions span residues 402–422 (ATGA…MSER) and 468–524 (LESS…PVLT). The bHLH domain occupies 412–461 (TGTKNHVMSERKRREKLNEMFLVLKSLLPSIHRVNKASILAETIAYLKEL). Positions 481 to 495 (TTTRLITRPSRGNNE) are enriched in polar residues. The segment covering 508–519 (KSPELGRDDVER) has biased composition (basic and acidic residues).

This sequence belongs to the bHLH protein family. Efficient DNA binding requires dimerization with another bHLH protein.

It localises to the nucleus. In terms of biological role, putative transcriptional activator. Controls tissue-specific synthesis of anthocyanin pigments in various parts of the maize plant. The protein is Anthocyanin regulatory Lc protein (LC) of Zea mays (Maize).